The primary structure comprises 156 residues: MTSVIYPGTFDPITNGHLDIIERSAVIFPRVLVAVANSPSKKPLFSLEERVELVRQSVAHLSNVEVFGFSDLLANVIKQHNISAIIRGVRTTTDFEYELQLAALNRLLTKGVDSLFFPPAEKWAFVSSTIVREIYLHGGDVAELVPEPVFNALKAR.

T9 is a substrate binding site. ATP is bound by residues 9–10 and H17; that span reads TF. The substrate site is built by K41, L73, and R87. Residues 88-90, E98, and 123-129 each bind ATP; these read GVR and WAFVSST.

This sequence belongs to the bacterial CoaD family. Homohexamer. It depends on Mg(2+) as a cofactor.

It is found in the cytoplasm. The catalysed reaction is (R)-4'-phosphopantetheine + ATP + H(+) = 3'-dephospho-CoA + diphosphate. The protein operates within cofactor biosynthesis; coenzyme A biosynthesis; CoA from (R)-pantothenate: step 4/5. Its function is as follows. Reversibly transfers an adenylyl group from ATP to 4'-phosphopantetheine, yielding dephospho-CoA (dPCoA) and pyrophosphate. The chain is Phosphopantetheine adenylyltransferase from Haemophilus influenzae (strain 86-028NP).